The chain runs to 242 residues: MSQPIYKRILLKLSGEALQGDEGFGIDPSILDRMALEIKELVAMGVEVGVVLGGGNLFRGAKLAKAGMNRVVGDHMGMLATVMNGLAMRDALHRADVNAKLMSAFQLNGICDTYNWSEAIKMLREKRVVIFSAGTGSPFFTTDSAACLRGIEIEADVVLKATKVDGVYNCDPAKNADAVLYHQLNYADVIEHELQVMDLAAFTLARDHHMPIRVFNMGKPGALRRVILGEVEGTLICDQKLS.

Residue 12-15 (KLSG) coordinates ATP. The involved in allosteric activation by GTP stretch occupies residues 20–25 (GDEGFG). Glycine 54 provides a ligand contact to UMP. Residues glycine 55 and arginine 59 each coordinate ATP. Residues aspartate 74 and 135 to 142 (TGSPFFTT) contribute to the UMP site. ATP contacts are provided by threonine 162, tyrosine 168, and aspartate 171.

The protein belongs to the UMP kinase family. Homohexamer.

It is found in the cytoplasm. The enzyme catalyses UMP + ATP = UDP + ADP. Its pathway is pyrimidine metabolism; CTP biosynthesis via de novo pathway; UDP from UMP (UMPK route): step 1/1. Allosterically activated by GTP. Inhibited by UTP. Its function is as follows. Catalyzes the reversible phosphorylation of UMP to UDP. This chain is Uridylate kinase, found in Pasteurella multocida (strain Pm70).